The chain runs to 529 residues: BAR/IMD domain-containing adapter protein 2-like 2 (529 aa).

In terms of domain architecture, IMD spans M1–L239. 2 disordered regions span residues E221–R327 and T403–F510. 3 positions are modified to phosphoserine: S231, S272, and S302. Over residues S299–S313 the composition is skewed to low complexity. Residues G324–E387 form the SH3 domain. Low complexity-rich tracts occupy residues T403 to P413 and R452 to R462. Positions A463–P472 are enriched in pro residues. Phosphoserine occurs at positions 478 and 481.

In terms of tissue distribution, expressed in the epithelial layer of the intestine (at protein level).

It is found in the cell membrane. Its subcellular location is the cell junction. The protein localises to the cytoplasmic vesicle membrane. Phosphoinositides-binding protein that induces the formation of planar or gently curved membrane structures. Binds to phosphoinositides, including to phosphatidylinositol 4,5-bisphosphate (PtdIns(4,5)P2) headgroups. There seems to be no clear preference for a specific phosphoinositide. In Homo sapiens (Human), this protein is BAR/IMD domain-containing adapter protein 2-like 2 (BAIAP2L2).